A 637-amino-acid chain; its full sequence is Biosynthetic arginine decarboxylase (637 aa).

Residue Lys101 is modified to N6-(pyridoxal phosphate)lysine. Residue 286 to 296 (FDVGGGLAVDY) participates in substrate binding.

It belongs to the Orn/Lys/Arg decarboxylase class-II family. SpeA subfamily. It depends on Mg(2+) as a cofactor. Pyridoxal 5'-phosphate serves as cofactor.

It carries out the reaction L-arginine + H(+) = agmatine + CO2. The protein operates within amine and polyamine biosynthesis; agmatine biosynthesis; agmatine from L-arginine: step 1/1. Functionally, catalyzes the biosynthesis of agmatine from arginine. This chain is Biosynthetic arginine decarboxylase, found in Shewanella loihica (strain ATCC BAA-1088 / PV-4).